A 338-amino-acid chain; its full sequence is Ketol-acid reductoisomerase (NADP(+)) (338 aa).

The KARI N-terminal Rossmann domain occupies 1 to 181 (MKVFYDKDCD…GGGKAGIIET (181 aa)). Residues 24–27 (YGSQ), arginine 47, and serine 52 contribute to the NADP(+) site. Residue histidine 107 is part of the active site. NADP(+) is bound at residue glycine 133. The region spanning 182–327 (NFREETETDL…GKLRAMMPWI (146 aa)) is the KARI C-terminal knotted domain. Aspartate 190, glutamate 194, glutamate 226, and glutamate 230 together coordinate Mg(2+). Serine 251 is a binding site for substrate.

Belongs to the ketol-acid reductoisomerase family. Mg(2+) serves as cofactor.

The enzyme catalyses (2R)-2,3-dihydroxy-3-methylbutanoate + NADP(+) = (2S)-2-acetolactate + NADPH + H(+). It carries out the reaction (2R,3R)-2,3-dihydroxy-3-methylpentanoate + NADP(+) = (S)-2-ethyl-2-hydroxy-3-oxobutanoate + NADPH + H(+). Its pathway is amino-acid biosynthesis; L-isoleucine biosynthesis; L-isoleucine from 2-oxobutanoate: step 2/4. The protein operates within amino-acid biosynthesis; L-valine biosynthesis; L-valine from pyruvate: step 2/4. Involved in the biosynthesis of branched-chain amino acids (BCAA). Catalyzes an alkyl-migration followed by a ketol-acid reduction of (S)-2-acetolactate (S2AL) to yield (R)-2,3-dihydroxy-isovalerate. In the isomerase reaction, S2AL is rearranged via a Mg-dependent methyl migration to produce 3-hydroxy-3-methyl-2-ketobutyrate (HMKB). In the reductase reaction, this 2-ketoacid undergoes a metal-dependent reduction by NADPH to yield (R)-2,3-dihydroxy-isovalerate. The protein is Ketol-acid reductoisomerase (NADP(+)) of Polaromonas naphthalenivorans (strain CJ2).